The sequence spans 123 residues: Probable histone H2B 3 (123 aa).

Residues 1–31 (MAPPKPSAKGAKKAAKTVSKPKDGKKRKHAR) form a disordered region. Ser-110 is a glycosylation site (O-linked (GlcNAc) serine). A Glycyl lysine isopeptide (Lys-Gly) (interchain with G-Cter in ubiquitin) cross-link involves residue Lys-118.

Belongs to the histone H2B family. In terms of assembly, the nucleosome is a histone octamer containing two molecules each of H2A, H2B, H3 and H4 assembled in one H3-H4 heterotetramer and two H2A-H2B heterodimers. The octamer wraps approximately 147 bp of DNA. Monoubiquitination of Lys-118 gives a specific tag for epigenetic transcriptional activation and is also prerequisite for histone H3 'Lys-4' and 'Lys-79' methylation. Post-translationally, glcNAcylation at Ser-110 promotes monoubiquitination of Lys-118. It fluctuates in response to extracellular glucose, and associates with transcribed genes.

It localises to the nucleus. It is found in the chromosome. Core component of nucleosome. Nucleosomes wrap and compact DNA into chromatin, limiting DNA accessibility to the cellular machineries which require DNA as a template. Histones thereby play a central role in transcription regulation, DNA repair, DNA replication and chromosomal stability. DNA accessibility is regulated via a complex set of post-translational modifications of histones, also called histone code, and nucleosome remodeling. This Caenorhabditis elegans protein is Probable histone H2B 3 (his-41).